The primary structure comprises 288 residues: Cytochrome b-c1 complex catalytic subunit, mitochondrial (288 aa).

A helical transmembrane segment spans residues 12-34 (SMVQKFIAGGVGVTGLTASYLLY). The Cytochrome c domain occupies 69-222 (ASIRRGFQVY…DLVEYEDGTP (154 aa)). The heme c site is built by Cys82, Cys85, and His86. Residues 111 to 121 (EELEYDDEPDD) are compositionally biased toward acidic residues. A disordered region spans residues 111-138 (EELEYDDEPDDEGKPRKRPGKLADYIPG). A helical transmembrane segment spans residues 250-268 (WGLKALVVLSSLYLLSIWV).

This sequence belongs to the cytochrome c family. As to quaternary structure, component of the ubiquinol-cytochrome c oxidoreductase (cytochrome b-c1 complex, complex III, CIII), a multisubunit enzyme composed of 10 subunits. The complex is composed of 3 respiratory subunits cytochrome b (COB), cytochrome c1 (CYT1) and Rieske protein (RIP1), 2 core protein subunits COR1 and QCR2, and 5 low-molecular weight protein subunits QCR6, QCR7, QCR8, QCR9 and QCR10. The complex exists as an obligatory dimer and forms supercomplexes (SCs) in the inner mitochondrial membrane with a monomer or a dimer of cytochrome c oxidase (complex IV, CIV), resulting in 2 different assemblies (supercomplexes III(2)IV and III(2)IV(2)). Requires heme c as cofactor.

It is found in the mitochondrion inner membrane. It catalyses the reaction a quinol + 2 Fe(III)-[cytochrome c](out) = a quinone + 2 Fe(II)-[cytochrome c](out) + 2 H(+)(out). Component of the ubiquinol-cytochrome c oxidoreductase, a multisubunit transmembrane complex that is part of the mitochondrial electron transport chain which drives oxidative phosphorylation. The complex plays an important role in the uptake of multiple carbon sources present in different host niches. This chain is Cytochrome b-c1 complex catalytic subunit, mitochondrial, found in Candida albicans (strain SC5314 / ATCC MYA-2876) (Yeast).